The following is a 439-amino-acid chain: AP-2 complex subunit mu (439 aa).

One can recognise an MHD domain in the interval 172 to 438; sequence RNELYIDVVE…LTKAGTYQNR (267 aa).

The protein belongs to the adaptor complexes medium subunit family. In terms of assembly, adaptor protein complex 2 (AP-2) is a heterotetramer composed of two large adaptins (alpha-type and beta-type subunits), a medium adaptin (mu-type subunit AP50) and a small adaptin (sigma-type subunit AP17). Post-translationally, phosphorylated.

Its subcellular location is the cell membrane. It is found in the membrane. It localises to the coated pit. Component of the adaptor complexes which link clathrin to receptors in coated vesicles. Clathrin-associated protein complexes are believed to interact with the cytoplasmic tails of membrane proteins, leading to their selection and concentration. AP50 is a subunit of the plasma membrane adaptor. In Dictyostelium discoideum (Social amoeba), this protein is AP-2 complex subunit mu (apm2).